The following is a 186-amino-acid chain: Shikimate kinase (186 aa).

Residue 21-26 (GVGKTT) coordinates ATP. Residue Thr25 coordinates Mg(2+). 3 residues coordinate substrate: Asp43, Arg67, and Gly90. An ATP-binding site is contributed by Arg129. Substrate is bound at residue Arg147.

The protein belongs to the shikimate kinase family. In terms of assembly, monomer. Mg(2+) is required as a cofactor.

It localises to the cytoplasm. The enzyme catalyses shikimate + ATP = 3-phosphoshikimate + ADP + H(+). The protein operates within metabolic intermediate biosynthesis; chorismate biosynthesis; chorismate from D-erythrose 4-phosphate and phosphoenolpyruvate: step 5/7. Functionally, catalyzes the specific phosphorylation of the 3-hydroxyl group of shikimic acid using ATP as a cosubstrate. This is Shikimate kinase from Bacillus subtilis (strain 168).